A 596-amino-acid polypeptide reads, in one-letter code: DNA polymerase kappa (596 aa).

The region spanning 85-320 (CVCIDMDAYF…LPIRKVGGIG (236 aa)) is the UmuC domain. Mg(2+) contacts are provided by Asp89 and Asp180. The active site involves Glu181. The UBZ4-type zinc finger occupies 516–545 (TRPCPICGTDVENRLDVMNCHVDECILKVQ). Zn(2+) is bound by residues Cys519, Cys522, His536, and Cys540. The tract at residues 559–584 (NKSTQKPERPSTKKRKLQEKRPKAKK) is disordered. Residues 570 to 584 (TKKRKLQEKRPKAKK) are compositionally biased toward basic residues.

This sequence belongs to the DNA polymerase type-Y family. It depends on Mg(2+) as a cofactor. Mn(2+) serves as cofactor.

It is found in the nucleus. The catalysed reaction is DNA(n) + a 2'-deoxyribonucleoside 5'-triphosphate = DNA(n+1) + diphosphate. In terms of biological role, DNA polymerase specifically involved in DNA repair. Plays an important role in translesion synthesis, where the normal high-fidelity DNA polymerases cannot proceed and DNA synthesis stalls. Depending on the context, it inserts the correct base, but causes frequent base transitions, transversions and frameshifts. Lacks 3'-5' proofreading exonuclease activity. Forms a Schiff base with 5'-deoxyribose phosphate at abasic sites, but does not have lyase activity. This is DNA polymerase kappa (polk-1) from Caenorhabditis elegans.